The sequence spans 197 residues: Probable GTP-binding protein EngB (197 aa).

The 174-residue stretch at 24–197 (DIPEIALAGR…WDAILEKVNK (174 aa)) folds into the EngB-type G domain. Residues 32 to 39 (GRSNVGKS), 59 to 63 (GKTQL), 77 to 80 (DVPG), 144 to 147 (TKAD), and 176 to 178 (FSS) each bind GTP. 2 residues coordinate Mg(2+): Ser-39 and Thr-61.

The protein belongs to the TRAFAC class TrmE-Era-EngA-EngB-Septin-like GTPase superfamily. EngB GTPase family. Requires Mg(2+) as cofactor.

Necessary for normal cell division and for the maintenance of normal septation. This chain is Probable GTP-binding protein EngB, found in Streptococcus gordonii (strain Challis / ATCC 35105 / BCRC 15272 / CH1 / DL1 / V288).